Reading from the N-terminus, the 424-residue chain is Histidine--tRNA ligase (424 aa).

The protein belongs to the class-II aminoacyl-tRNA synthetase family. Homodimer.

The protein localises to the cytoplasm. The catalysed reaction is tRNA(His) + L-histidine + ATP = L-histidyl-tRNA(His) + AMP + diphosphate + H(+). The protein is Histidine--tRNA ligase of Shewanella piezotolerans (strain WP3 / JCM 13877).